The chain runs to 193 residues: Flagellin B3 (193 aa).

Residues 1–12 constitute a propeptide that is removed on maturation; sequence MFEFITDEDERG.

The protein belongs to the archaeal flagellin family. Post-translationally, glycosylated.

Its subcellular location is the archaeal flagellum. Flagellin is the subunit protein which polymerizes to form the filaments of archaeal flagella. This is Flagellin B3 (flaB3) from Halobacterium salinarum (strain ATCC 700922 / JCM 11081 / NRC-1) (Halobacterium halobium).